Here is a 258-residue protein sequence, read N- to C-terminus: Serine protease VLSP-3 (258 aa).

The first 18 residues, 1–18, serve as a signal peptide directing secretion; that stretch reads MVLIRVLANLLVLQLSYA. Positions 19–24 are excised as a propeptide; it reads QKSSEL. A Peptidase S1 domain is found at 25 to 249; it reads VIGGDECNIN…YTDWIQSIIA (225 aa). Intrachain disulfides connect cysteine 31–cysteine 163, cysteine 50–cysteine 66, cysteine 98–cysteine 256, cysteine 142–cysteine 210, cysteine 174–cysteine 189, and cysteine 200–cysteine 225. Asparagine 44 carries an N-linked (GlcNAc...) asparagine glycan. Residue histidine 65 is the Charge relay system of the active site. N-linked (GlcNAc...) asparagine glycans are attached at residues asparagine 79 and asparagine 103. Aspartate 110 functions as the Charge relay system in the catalytic mechanism. N-linked (GlcNAc...) asparagine glycans are attached at residues asparagine 154 and asparagine 170. Serine 204 (charge relay system) is an active-site residue. Asparagine 251 carries N-linked (GlcNAc...) asparagine glycosylation.

Belongs to the peptidase S1 family. Snake venom subfamily. In terms of assembly, monomer. As to expression, expressed by the venom gland.

The protein resides in the secreted. Functionally, snake venom serine protease that may act in the hemostasis system of the prey. This chain is Serine protease VLSP-3, found in Macrovipera lebetinus (Levantine viper).